A 263-amino-acid chain; its full sequence is MSDAEEQEYEEEQPEEEEAAEEEEEAPEEPEPAAEPEEERPKPSRPVVPPLIPPKIPEGERVDFDDIHRKRMEKDLLELQTLIDVHFEQRKKEEEELVALKERIERRRAERAEQQRFRTEKERERQAKLAEEKMRKEEEEAKKRAEDDAKKKKVLSNMGAHFGGYLVKAEQKRGKRQTGREMKLRILSERKKPLNIDHMGEEQLREKAQELSDWIHQLESEKFDLMAKLKQQKYEINVLYNRISHAQKFRKGAGKGRVGGRWK.

The span at 1-38 shows a compositional bias: acidic residues; it reads MSDAEEQEYEEEQPEEEEAAEEEEEAPEEPEPAAEPEE. Disordered regions lie at residues 1-64 and 109-154; these read MSDA…RVDF and AERA…KKKV. Residue Ser2 is modified to Phosphoserine; by CK2. Positions 44 to 56 are enriched in pro residues; it reads SRPVVPPLIPPKI. Residues 109-150 are compositionally biased toward basic and acidic residues; it reads AERAEQQRFRTEKERERQAKLAEEKMRKEEEEAKKRAEDDAK.

Belongs to the troponin T family. As to quaternary structure, interacts with TPM3. In terms of tissue distribution, expressed dominantly in slow muscles, like masseter, diaphragm, psoas major and spinnalis. Isoform 2 is also expressed in fast muscles.

Troponin T is the tropomyosin-binding subunit of troponin, the thin filament regulatory complex which confers calcium-sensitivity to striated muscle actomyosin ATPase activity. This chain is Troponin T, slow skeletal muscle (TNNT1), found in Bos taurus (Bovine).